A 474-amino-acid polypeptide reads, in one-letter code: MATNWGSLLQNEQQLEELARQAVDRALAEGVLLRTSQEPTSSEVVSYAPFTLFPSLVPSALLEQAYAVQMDFNLLVDAVNQNAAFLEQTLSSTIEQDDFTARLFDIHKQVLKEGIAQTVFLGLNRSDYMFQRSTDGSPALKQIEINTISASFGGLASRTPAVHRHVLSVLSKTKEAGKILSNNPSKGLALGIAKAWELYGSTNALVLLIAQEKERNIFDQRAIENELLARNIHVIRRTFEDISEKGSLDQDRRLFVDGQEIAVVYFRDGYMPRQYSLQNWEARLLLERSCAAKCPDIATQLAGTKKVQQELSRPGMLEMLLPGQPEAVARLRATFAGLYSLDMGEEGDQAIAKALAAPSRFVLKPQREGGGNNLYGEEMVQALKQLKDSEERASYILMEKTEPEPFENCLLRPGSPAQVVQCISELGIFGVYVRHEKTLVMNKHVGHLLRTKAIEHADGGVAAGVAVLDNPYPV.

N-acetylalanine is present on alanine 2. Arginine 125 is a binding site for substrate. Position 144 (glutamate 144) interacts with ATP. Glutamate 144 and asparagine 146 together coordinate Mg(2+). Substrate is bound by residues 148–151, 214–216, glutamine 220, and 267–270; these read ISAS, ERN, and RDGY. Residues lysine 305, 364–373, tyrosine 375, and 398–401 contribute to the ATP site; these read KPQREGGGNN and MEKT. Glutamate 368 is a binding site for Mg(2+). Phosphoserine is present on serine 415. Glutamate 425 provides a ligand contact to ATP. Arginine 450 provides a ligand contact to substrate. Residues lysine 452 and aspartate 458 each coordinate ATP. 461 to 462 is a substrate binding site; it reads VA.

The protein belongs to the eukaryotic GSH synthase family. Homodimer. It depends on Mg(2+) as a cofactor.

It carries out the reaction gamma-L-glutamyl-L-cysteine + glycine + ATP = glutathione + ADP + phosphate + H(+). It functions in the pathway sulfur metabolism; glutathione biosynthesis; glutathione from L-cysteine and L-glutamate: step 2/2. In terms of biological role, catalyzes the production of glutathione from gamma-glutamylcysteine and glycine in an ATP-dependent manner. Glutathione (gamma-glutamylcysteinylglycine, GSH) is the most abundant intracellular thiol in living aerobic cells and is required for numerous processes including the protection of cells against oxidative damage, amino acid transport, the detoxification of foreign compounds, the maintenance of protein sulfhydryl groups in a reduced state and acts as a cofactor for a number of enzymes. The sequence is that of Glutathione synthetase (GSS) from Macaca fascicularis (Crab-eating macaque).